The sequence spans 109 residues: ATPase inhibitor, mitochondrial (109 aa).

A mitochondrion-targeting transit peptide spans 1–22; that stretch reads MAGSSSLLRAGIRNVLLMQMRR. The segment at 27-56 is N-terminal inhibitory region; that stretch reads LGELGKGAGKGGGGGGSVREAGGAFGKRQA. Residues 27-109 are disordered; that stretch reads LGELGKGAGK…KSKIKKLNDD (83 aa). Residues 30 to 43 show a composition bias toward gly residues; sequence LGKGAGKGGGGGGS. Basic and acidic residues-rich tracts occupy residues 55–69 and 77–98; these read QAAE…KEQE and HHEE…EIER. The stretch at 71–109 forms a coiled coil; the sequence is IASLRKHHEEEIRHHKGEIERLQKEIERHKSKIKKLNDD. Residues 78–109 are antiparallel alpha-helical coiled coil region; it reads HEEEIRHHKGEIERLQKEIERHKSKIKKLNDD. The segment covering 99 to 109 has biased composition (basic residues); the sequence is HKSKIKKLNDD.

Belongs to the ATPase inhibitor family. In terms of assembly, homodimer; represents the active form and is present at a pH value below 6.5. Homotetramer; represents the inactive form and is present at a pH value above 7.0.

The protein resides in the mitochondrion. In terms of biological role, endogenous F(1)F(o)-ATPase inhibitor limiting ATP depletion when the mitochondrial membrane potential falls below a threshold and the F(1)F(o)-ATP synthase starts hydrolyzing ATP to pump protons out of the mitochondrial matrix. Required to avoid the consumption of cellular ATP when the F(1)F(o)-ATP synthase enzyme acts as an ATP hydrolase. Indirectly acts as a regulator of heme synthesis in erythroid tissues: regulates heme synthesis by modulating the mitochondrial pH and redox potential, allowing fech to efficiently catalyze the incorporation of iron into protoporphyrin IX to produce heme. In Xenopus tropicalis (Western clawed frog), this protein is ATPase inhibitor, mitochondrial.